The chain runs to 235 residues: Uridylate kinase (235 aa).

Lys9–Gly12 contacts ATP. Gly51 provides a ligand contact to UMP. ATP contacts are provided by Gly52 and Arg56. UMP-binding positions include Asp71 and Thr132–Thr139. Residues Thr159, Tyr165, and Asp168 each contribute to the ATP site.

The protein belongs to the UMP kinase family. Homohexamer.

It is found in the cytoplasm. It catalyses the reaction UMP + ATP = UDP + ADP. Its pathway is pyrimidine metabolism; CTP biosynthesis via de novo pathway; UDP from UMP (UMPK route): step 1/1. Its activity is regulated as follows. Inhibited by UTP. In terms of biological role, catalyzes the reversible phosphorylation of UMP to UDP. This chain is Uridylate kinase, found in Christiangramia forsetii (strain DSM 17595 / CGMCC 1.15422 / KT0803) (Gramella forsetii).